We begin with the raw amino-acid sequence, 1553 residues long: Probable serine/threonine-protein kinase qkgA (1553 aa).

The tract at residues 113–142 (SSSSSSSSTSSSPSLTSSPSSPISTSPPYH) is disordered. 4 LRR repeats span residues 287-309 (NGTFLLLSKSNITRFPMSIINMC), 311-333 (QLVELDMSNNRITEIPIEITELK), 334-356 (FLKNLNLSDNLINDIPLEICNLT), and 357-378 (LLKVLLLNENPLNNFPSSIVEL). The region spanning 395 to 619 (SCETWNKVKL…KRLIHESEKS (225 aa)) is the Roc domain. 3 disordered regions span residues 643-696 (NQGR…QQQQ), 955-1019 (ISNS…PSSQ), and 1048-1090 (NQNG…NNNK). Low complexity-rich tracts occupy residues 648-675 (SISNSASNSSSSLLNSSSSSSPSLTSKK), 683-696 (SQQQQQQHQQQQQQ), 956-1018 (SNST…SPSS), and 1059-1090 (TTTTTSTSTSTTSTTTPTTTTPTIPIKNNNNK). The region spanning 694-893 (QQQLQQSIKE…KTYWKDGVLL (200 aa)) is the COR domain. Positions 1242–1546 (ILYERQIGEG…QTSYFDSPFL (305 aa)) constitute a Protein kinase domain. ATP-binding positions include 1248–1256 (IGEGGFGLI) and Lys1271. Asp1393 acts as the Proton acceptor in catalysis.

Belongs to the protein kinase superfamily. TKL Ser/Thr protein kinase family. ROCO subfamily.

The catalysed reaction is L-seryl-[protein] + ATP = O-phospho-L-seryl-[protein] + ADP + H(+). It carries out the reaction L-threonyl-[protein] + ATP = O-phospho-L-threonyl-[protein] + ADP + H(+). Its function is as follows. Involved in growth, and during development, in aggregation. This chain is Probable serine/threonine-protein kinase qkgA (qkgA-1), found in Dictyostelium discoideum (Social amoeba).